Reading from the N-terminus, the 336-residue chain is Tyrosine recombinase XerC (336 aa).

The Core-binding (CB) domain occupies 14–106; it reads VANCRWLGEF…SVKSFYRFLL (93 aa). The 204-residue stretch at 127 to 330 folds into the Tyr recombinase domain; it reads KIPDFLSEEE…TFNRLRDAYT (204 aa). Residues Arg-183, Lys-207, His-282, Arg-285, and His-308 contribute to the active site. Tyr-317 acts as the O-(3'-phospho-DNA)-tyrosine intermediate in catalysis.

This sequence belongs to the 'phage' integrase family. XerC subfamily. In terms of assembly, forms a cyclic heterotetrameric complex composed of two molecules of XerC and two molecules of XerD.

It is found in the cytoplasm. Functionally, site-specific tyrosine recombinase, which acts by catalyzing the cutting and rejoining of the recombining DNA molecules. The XerC-XerD complex is essential to convert dimers of the bacterial chromosome into monomers to permit their segregation at cell division. It also contributes to the segregational stability of plasmids. This chain is Tyrosine recombinase XerC, found in Chlorobaculum tepidum (strain ATCC 49652 / DSM 12025 / NBRC 103806 / TLS) (Chlorobium tepidum).